The sequence spans 193 residues: MSTTYLLGLAVALAMDAFAVAIAVGIGLKRIRFRQAFRLSYHFGLFQALMPIIGWALGTGIRQFTQSYAHWIAFTLLALVGANMIREALSDDEEEPGEKDPTRGLRLIILSLATSIDALAVGLSLSMLEVSIWYPALIIGLVAGAFTLFGMLLGQRIAKLQRFSSYAEVLGGIILWAIGLNILYDNGVFSPFL.

A run of 6 helical transmembrane segments spans residues 6–26 (LLGL…AVGI), 41–61 (YHFG…GTGI), 65–85 (TQSY…ANMI), 107–127 (LIIL…SLSM), 132–152 (IWYP…FGML), and 169–189 (VLGG…NGVF).

The protein belongs to the MntP (TC 9.B.29) family.

It is found in the cell inner membrane. Probably functions as a manganese efflux pump. In Desulfotalea psychrophila (strain LSv54 / DSM 12343), this protein is Putative manganese efflux pump MntP.